We begin with the raw amino-acid sequence, 153 residues long: Small ribosomal subunit protein uS15 (153 aa).

Belongs to the universal ribosomal protein uS15 family. In terms of assembly, part of the 30S ribosomal subunit.

The protein is Small ribosomal subunit protein uS15 of Sulfolobus acidocaldarius (strain ATCC 33909 / DSM 639 / JCM 8929 / NBRC 15157 / NCIMB 11770).